A 349-amino-acid polypeptide reads, in one-letter code: tRNA pseudouridine synthase D (349 aa).

Phe-27 provides a ligand contact to substrate. Asp-80 acts as the Nucleophile in catalysis. Residue Asn-129 participates in substrate binding. Positions 155-303 constitute a TRUD domain; it reads GVPNYFGAQR…VEAARRAMLL (149 aa). Substrate is bound at residue Phe-329.

This sequence belongs to the pseudouridine synthase TruD family.

The enzyme catalyses uridine(13) in tRNA = pseudouridine(13) in tRNA. Its function is as follows. Responsible for synthesis of pseudouridine from uracil-13 in transfer RNAs. The chain is tRNA pseudouridine synthase D from Klebsiella pneumoniae subsp. pneumoniae (strain ATCC 700721 / MGH 78578).